A 211-amino-acid polypeptide reads, in one-letter code: Adenylate kinase (211 aa).

Position 10 to 15 (10 to 15 (GSGKGT)) interacts with ATP. An NMP region spans residues 30–59 (STGDLFRENILNSTTLGKEIKKIVEKGELV). AMP contacts are provided by residues Thr-31, Arg-36, 57 to 59 (ELV), 85 to 88 (GFPR), and Gln-92. The tract at residues 121–158 (GRRICKSCNNIFNIYTLATKKNGICDVCKGDLYQREDD) is LID. ATP is bound at residue Arg-122. Residues Cys-125 and Cys-128 each coordinate Zn(2+). 131–132 (IF) lines the ATP pocket. Residues Cys-145 and Cys-148 each contribute to the Zn(2+) site. AMP is bound by residues Arg-155 and Arg-166. Position 194 (Val-194) interacts with ATP.

This sequence belongs to the adenylate kinase family. As to quaternary structure, monomer.

The protein resides in the cytoplasm. The enzyme catalyses AMP + ATP = 2 ADP. It functions in the pathway purine metabolism; AMP biosynthesis via salvage pathway; AMP from ADP: step 1/1. Catalyzes the reversible transfer of the terminal phosphate group between ATP and AMP. Plays an important role in cellular energy homeostasis and in adenine nucleotide metabolism. This Borrelia garinii subsp. bavariensis (strain ATCC BAA-2496 / DSM 23469 / PBi) (Borreliella bavariensis) protein is Adenylate kinase.